The chain runs to 461 residues: Thyroid hormone receptor beta (461 aa).

The segment at 1 to 24 (MTPNSMTENRLPAWDKQKPHPDRG) is disordered. Residues 1–106 (MTPNSMTENR…IPSYLDKDEL (106 aa)) form a modulating region. The segment covering 13-24 (AWDKQKPHPDRG) has biased composition (basic and acidic residues). Positions 107, 110, 124, 127, 145, 151, 161, and 164 each coordinate Zn(2+). 2 consecutive NR C4-type zinc fingers follow at residues 107–127 (CVVCGDKATGYHYRCITCEGC) and 145–169 (CKYEGKCIIDKVTRNQCQECRFKKC). Positions 107 to 181 (CVVCGDKATG…VGMATDLVLD (75 aa)) form a DNA-binding region, nuclear receptor. The 245-residue stretch at 217–461 (EEWELIKTVT…PPLFLEVFED (245 aa)) folds into the NR LBD domain. Residues 244 to 461 (KFLPEDIGQA…PPLFLEVFED (218 aa)) are interaction with NR2F6. 3,3',5-triiodo-L-thyronine contacts are provided by arginine 282, asparagine 331, and histidine 435. Positions 282, 331, and 435 each coordinate L-thyroxine.

Belongs to the nuclear hormone receptor family. NR1 subfamily. Binds DNA as a dimer; homodimer and heterodimer with RXRA. Interacts with the coactivators NCOA1/SRC1, NCOA2/GRIP1, NCOA7 and MED1/TRAP220 in a ligand-inducible manner. Interacts with the corepressor NCOR1 in absence of ligand. Interacts with C1D. Interacts with NR2F6; the interaction impairs the binding of the THRB homodimer and THRB:RXRB heterodimer to T3 response elements. Interacts with PRMT2 and THRSP. Interacts with TACC1; this interaction is decreased in the presence of thyroid hormone T3.

It is found in the nucleus. Nuclear hormone receptor that can act as a repressor or activator of transcription. High affinity receptor for thyroid hormones, including triiodothyronine and thyroxine. The protein is Thyroid hormone receptor beta (Thrb) of Rattus norvegicus (Rat).